A 153-amino-acid polypeptide reads, in one-letter code: MSAKYTILEELIRPVVEGLGFEFWGMEYLSLGKDSVLRIYIETDAEKGIDVEDCARVSRQVSSILDVEDPITGEYNLEVSSPGLDRPLFSLAQYQAYIGSIVSLRLRVPFDGRRKFKGQLMGIESEDIVIRVDQEEYLLPIDLIDKANVVPQF.

Belongs to the RimP family.

Its subcellular location is the cytoplasm. Functionally, required for maturation of 30S ribosomal subunits. The chain is Ribosome maturation factor RimP from Marinomonas sp. (strain MWYL1).